The sequence spans 556 residues: MNIVEQMKQKLKEEIKEAVIRSGVATEADVPSVILETPKDKAHGDYSTNVAMQLARVAKKAPRMIAEDIVRHFNGEAVFVKKVDIAGPGFINFYMDNRYLTELVPAILQAGDAYGETNVGQGQKVQVEFVSANPTGSLHLGHARGAAVGDSLCNILKKAGFDVTREYYINDAGNQIANLAKSVEARYFQALGIKKDMPEDGYFGEDIIELGKKLAEEHGDKFVALDEQERLQLFREYGLAFEMDKIKKDLADFRVTFDVWYSETSLYHNGKIDKALETLREKGHIYEQDGATWFRSTTFGDDKDRVLIKQDGTYTYLLPDIAYHQDKLERGFEKIINIWGADHHGYIPRMKAAIAALGYDPDVLEVEIIQLVSLYQNGEKVRMSKRTGKAVTLRDLMEEVGLDATRYFFAMRSSDTHLDFDMDLAVSQSNENPVYYAQYAHARVCSMLRQGEEQGWRYDGDLSFTYELAEKEIDLLKKLGEFPSAVAEAAVKRSPHRMTNYIFDLASALHSFYNAEKVLDAANVEKSRARLALMKAVQITLKNALALVGVHAPEKM.

The short motif at 132 to 142 (ANPTGSLHLGH) is the 'HIGH' region element.

The protein belongs to the class-I aminoacyl-tRNA synthetase family. Monomer.

It localises to the cytoplasm. It catalyses the reaction tRNA(Arg) + L-arginine + ATP = L-arginyl-tRNA(Arg) + AMP + diphosphate. The polypeptide is Arginine--tRNA ligase (Anoxybacillus flavithermus (strain DSM 21510 / WK1)).